Consider the following 355-residue polypeptide: UDP-N-acetylglucosamine--N-acetylmuramyl-(pentapeptide) pyrophosphoryl-undecaprenol N-acetylglucosamine transferase (355 aa).

Residues 15–17 (TGG), Asn-127, Arg-163, Ser-191, Ile-244, 263–268 (ALTVSE), and Gln-288 each bind UDP-N-acetyl-alpha-D-glucosamine.

The protein belongs to the glycosyltransferase 28 family. MurG subfamily.

It is found in the cell inner membrane. The catalysed reaction is di-trans,octa-cis-undecaprenyl diphospho-N-acetyl-alpha-D-muramoyl-L-alanyl-D-glutamyl-meso-2,6-diaminopimeloyl-D-alanyl-D-alanine + UDP-N-acetyl-alpha-D-glucosamine = di-trans,octa-cis-undecaprenyl diphospho-[N-acetyl-alpha-D-glucosaminyl-(1-&gt;4)]-N-acetyl-alpha-D-muramoyl-L-alanyl-D-glutamyl-meso-2,6-diaminopimeloyl-D-alanyl-D-alanine + UDP + H(+). It functions in the pathway cell wall biogenesis; peptidoglycan biosynthesis. Functionally, cell wall formation. Catalyzes the transfer of a GlcNAc subunit on undecaprenyl-pyrophosphoryl-MurNAc-pentapeptide (lipid intermediate I) to form undecaprenyl-pyrophosphoryl-MurNAc-(pentapeptide)GlcNAc (lipid intermediate II). The protein is UDP-N-acetylglucosamine--N-acetylmuramyl-(pentapeptide) pyrophosphoryl-undecaprenol N-acetylglucosamine transferase of Escherichia coli O127:H6 (strain E2348/69 / EPEC).